A 98-amino-acid chain; its full sequence is Integration host factor subunit beta (98 aa).

This sequence belongs to the bacterial histone-like protein family. Heterodimer of an alpha and a beta chain.

Functionally, this protein is one of the two subunits of integration host factor, a specific DNA-binding protein that functions in genetic recombination as well as in transcriptional and translational control. The chain is Integration host factor subunit beta from Teredinibacter turnerae (strain ATCC 39867 / T7901).